We begin with the raw amino-acid sequence, 349 residues long: tRNA pseudouridine synthase D (349 aa).

F27 serves as a coordination point for substrate. D80 acts as the Nucleophile in catalysis. A substrate-binding site is contributed by N129. The 149-residue stretch at 155–303 (GVPNYFGAQR…VEAARRAMLL (149 aa)) folds into the TRUD domain. F329 lines the substrate pocket.

Belongs to the pseudouridine synthase TruD family.

It carries out the reaction uridine(13) in tRNA = pseudouridine(13) in tRNA. Functionally, responsible for synthesis of pseudouridine from uracil-13 in transfer RNAs. This chain is tRNA pseudouridine synthase D, found in Escherichia coli O8 (strain IAI1).